The following is a 172-amino-acid chain: Peptidyl-prolyl cis-trans isomerase CYP18-4 (172 aa).

Residues 7 to 170 (FFDMSLSGTP…KVVTITDCGQ (164 aa)) enclose the PPIase cyclophilin-type domain.

It belongs to the cyclophilin-type PPIase family. As to quaternary structure, interacts with A.tumefaciens VirD2. Ubiquitous, with higher levels in roots and flowers. Confined to vascular tissues. Also detected in stigmas, base of siliques and anthers.

It localises to the cytoplasm. The enzyme catalyses [protein]-peptidylproline (omega=180) = [protein]-peptidylproline (omega=0). Its activity is regulated as follows. Binds cyclosporin A (CsA). CsA mediates some of its effects via an inhibitory action on PPIase. In terms of biological role, PPIases accelerate the folding of proteins. It catalyzes the cis-trans isomerization of proline imidic peptide bonds in oligopeptides. This is Peptidyl-prolyl cis-trans isomerase CYP18-4 (CYP18-4) from Arabidopsis thaliana (Mouse-ear cress).